A 278-amino-acid polypeptide reads, in one-letter code: Pantothenate synthetase (278 aa).

26 to 33 contacts ATP; the sequence is MGNLHEGH. Histidine 33 functions as the Proton donor in the catalytic mechanism. Residue glutamine 57 participates in (R)-pantoate binding. Position 57 (glutamine 57) interacts with beta-alanine. Residue 144–147 coordinates ATP; the sequence is GKKD. Residue glutamine 150 coordinates (R)-pantoate. ATP-binding positions include glycine 173 and 181–184; that span reads LSSR.

This sequence belongs to the pantothenate synthetase family. As to quaternary structure, homodimer.

It localises to the cytoplasm. The catalysed reaction is (R)-pantoate + beta-alanine + ATP = (R)-pantothenate + AMP + diphosphate + H(+). Its pathway is cofactor biosynthesis; (R)-pantothenate biosynthesis; (R)-pantothenate from (R)-pantoate and beta-alanine: step 1/1. In terms of biological role, catalyzes the condensation of pantoate with beta-alanine in an ATP-dependent reaction via a pantoyl-adenylate intermediate. In Neisseria meningitidis serogroup B (strain ATCC BAA-335 / MC58), this protein is Pantothenate synthetase.